Reading from the N-terminus, the 509-residue chain is 2,3-bisphosphoglycerate-independent phosphoglycerate mutase (509 aa).

A Mn(2+)-binding site is contributed by Asp11. The residue at position 35 (Tyr35) is a Phosphotyrosine. Ser61 serves as a coordination point for Mn(2+). The active-site Phosphoserine intermediate is the Ser61. Residues His122, 152–153 (RD), Arg184, Arg190, 260–263 (RPDR), and Lys335 contribute to the substrate site. Mn(2+) is bound by residues Asp402, His406, Asp443, His444, and His461.

The protein belongs to the BPG-independent phosphoglycerate mutase family. As to quaternary structure, monomer. Mn(2+) serves as cofactor.

It carries out the reaction (2R)-2-phosphoglycerate = (2R)-3-phosphoglycerate. It functions in the pathway carbohydrate degradation; glycolysis; pyruvate from D-glyceraldehyde 3-phosphate: step 3/5. Its function is as follows. Essential for rapid growth and for sporulation. Catalyzes the interconversion of 2-phosphoglycerate and 3-phosphoglycerate. This chain is 2,3-bisphosphoglycerate-independent phosphoglycerate mutase, found in Bacillus anthracis.